A 529-amino-acid polypeptide reads, in one-letter code: Peptide chain release factor 3 (529 aa).

The tr-type G domain maps to 10-278 (ARRRTFAIIS…MFVEFAPGPQ (269 aa)). Residues 19–26 (SHPDAGKT), 87–91 (DTPGH), and 141–144 (NKMD) contribute to the GTP site.

The protein belongs to the TRAFAC class translation factor GTPase superfamily. Classic translation factor GTPase family. PrfC subfamily.

The protein localises to the cytoplasm. In terms of biological role, increases the formation of ribosomal termination complexes and stimulates activities of RF-1 and RF-2. It binds guanine nucleotides and has strong preference for UGA stop codons. It may interact directly with the ribosome. The stimulation of RF-1 and RF-2 is significantly reduced by GTP and GDP, but not by GMP. This Nitratidesulfovibrio vulgaris (strain DSM 19637 / Miyazaki F) (Desulfovibrio vulgaris) protein is Peptide chain release factor 3.